A 167-amino-acid polypeptide reads, in one-letter code: Translationally-controlled tumor protein homolog (167 aa).

The region spanning M1–I167 is the TCTP domain.

Belongs to the TCTP family.

It localises to the cytoplasm. The protein resides in the cytoskeleton. Functionally, involved in protein synthesis. Involved in microtubule stabilization. The sequence is that of Translationally-controlled tumor protein homolog from Debaryomyces hansenii (strain ATCC 36239 / CBS 767 / BCRC 21394 / JCM 1990 / NBRC 0083 / IGC 2968) (Yeast).